A 95-amino-acid polypeptide reads, in one-letter code: Co-chaperonin GroES (95 aa).

This sequence belongs to the GroES chaperonin family. Heptamer of 7 subunits arranged in a ring. Interacts with the chaperonin GroEL.

Its subcellular location is the cytoplasm. In terms of biological role, together with the chaperonin GroEL, plays an essential role in assisting protein folding. The GroEL-GroES system forms a nano-cage that allows encapsulation of the non-native substrate proteins and provides a physical environment optimized to promote and accelerate protein folding. GroES binds to the apical surface of the GroEL ring, thereby capping the opening of the GroEL channel. The polypeptide is Co-chaperonin GroES (Rickettsia conorii (strain ATCC VR-613 / Malish 7)).